Consider the following 461-residue polypeptide: Bifunctional protein GlmU (461 aa).

The interval Met1–Arg229 is pyrophosphorylase. UDP-N-acetyl-alpha-D-glucosamine-binding positions include Leu8–Gly11, Lys22, Gln72, and Gly77–Thr78. Asp102 serves as a coordination point for Mg(2+). Residues Gly139, Glu154, Asn169, and Asn227 each contribute to the UDP-N-acetyl-alpha-D-glucosamine site. Asn227 is a binding site for Mg(2+). The linker stretch occupies residues Ile230–Asp250. The interval Gly251–Lys461 is N-acetyltransferase. Residues Arg332 and Lys350 each contribute to the UDP-N-acetyl-alpha-D-glucosamine site. Catalysis depends on His362, which acts as the Proton acceptor. Residues Tyr365 and Asn376 each contribute to the UDP-N-acetyl-alpha-D-glucosamine site. Acetyl-CoA-binding residues include Ala422 and Arg439.

The protein in the N-terminal section; belongs to the N-acetylglucosamine-1-phosphate uridyltransferase family. This sequence in the C-terminal section; belongs to the transferase hexapeptide repeat family. In terms of assembly, homotrimer. Mg(2+) serves as cofactor.

It localises to the cytoplasm. The enzyme catalyses alpha-D-glucosamine 1-phosphate + acetyl-CoA = N-acetyl-alpha-D-glucosamine 1-phosphate + CoA + H(+). It catalyses the reaction N-acetyl-alpha-D-glucosamine 1-phosphate + UTP + H(+) = UDP-N-acetyl-alpha-D-glucosamine + diphosphate. It participates in nucleotide-sugar biosynthesis; UDP-N-acetyl-alpha-D-glucosamine biosynthesis; N-acetyl-alpha-D-glucosamine 1-phosphate from alpha-D-glucosamine 6-phosphate (route II): step 2/2. Its pathway is nucleotide-sugar biosynthesis; UDP-N-acetyl-alpha-D-glucosamine biosynthesis; UDP-N-acetyl-alpha-D-glucosamine from N-acetyl-alpha-D-glucosamine 1-phosphate: step 1/1. It functions in the pathway bacterial outer membrane biogenesis; LPS lipid A biosynthesis. In terms of biological role, catalyzes the last two sequential reactions in the de novo biosynthetic pathway for UDP-N-acetylglucosamine (UDP-GlcNAc). The C-terminal domain catalyzes the transfer of acetyl group from acetyl coenzyme A to glucosamine-1-phosphate (GlcN-1-P) to produce N-acetylglucosamine-1-phosphate (GlcNAc-1-P), which is converted into UDP-GlcNAc by the transfer of uridine 5-monophosphate (from uridine 5-triphosphate), a reaction catalyzed by the N-terminal domain. In Lactobacillus delbrueckii subsp. bulgaricus (strain ATCC 11842 / DSM 20081 / BCRC 10696 / JCM 1002 / NBRC 13953 / NCIMB 11778 / NCTC 12712 / WDCM 00102 / Lb 14), this protein is Bifunctional protein GlmU.